The following is a 203-amino-acid chain: tRNA (pseudouridine(54)-N(1))-methyltransferase (203 aa).

L135 and G156 together coordinate S-adenosyl-L-methionine.

It belongs to the methyltransferase superfamily. TrmY family. As to quaternary structure, homodimer.

The protein localises to the cytoplasm. It carries out the reaction pseudouridine(54) in tRNA + S-adenosyl-L-methionine = N(1)-methylpseudouridine(54) in tRNA + S-adenosyl-L-homocysteine + H(+). Functionally, specifically catalyzes the N1-methylation of pseudouridine at position 54 (Psi54) in tRNAs. The chain is tRNA (pseudouridine(54)-N(1))-methyltransferase from Thermococcus onnurineus (strain NA1).